We begin with the raw amino-acid sequence, 186 residues long: Acireductone dioxygenase (186 aa).

4 residues coordinate Fe(2+): H96, H98, E102, and H140. Residues H96, H98, E102, and H140 each contribute to the Ni(2+) site.

The protein belongs to the acireductone dioxygenase (ARD) family. In terms of assembly, monomer. Requires Fe(2+) as cofactor. It depends on Ni(2+) as a cofactor.

It catalyses the reaction 1,2-dihydroxy-5-(methylsulfanyl)pent-1-en-3-one + O2 = 3-(methylsulfanyl)propanoate + CO + formate + 2 H(+). The catalysed reaction is 1,2-dihydroxy-5-(methylsulfanyl)pent-1-en-3-one + O2 = 4-methylsulfanyl-2-oxobutanoate + formate + 2 H(+). It functions in the pathway amino-acid biosynthesis; L-methionine biosynthesis via salvage pathway; L-methionine from S-methyl-5-thio-alpha-D-ribose 1-phosphate: step 5/6. Its function is as follows. Catalyzes 2 different reactions between oxygen and the acireductone 1,2-dihydroxy-3-keto-5-methylthiopentene (DHK-MTPene) depending upon the metal bound in the active site. Fe-containing acireductone dioxygenase (Fe-ARD) produces formate and 2-keto-4-methylthiobutyrate (KMTB), the alpha-ketoacid precursor of methionine in the methionine recycle pathway. Ni-containing acireductone dioxygenase (Ni-ARD) produces methylthiopropionate, carbon monoxide and formate, and does not lie on the methionine recycle pathway. This chain is Acireductone dioxygenase, found in Methylococcus capsulatus (strain ATCC 33009 / NCIMB 11132 / Bath).